Consider the following 279-residue polypeptide: Oxygen-dependent coproporphyrinogen-III oxidase (279 aa).

Serine 102 provides a ligand contact to substrate. The a divalent metal cation site is built by histidine 106 and histidine 116. The Proton donor role is filled by histidine 116. 118 to 120 (NTR) contacts substrate. Positions 149 and 179 each coordinate a divalent metal cation. The important for dimerization stretch occupies residues 244–279 (YVEFNLLYDRGTKFGLMTDGNVEAILMSLPPEVKWA).

It belongs to the aerobic coproporphyrinogen-III oxidase family. Homodimer. The cofactor is a divalent metal cation.

Its subcellular location is the cytoplasm. It catalyses the reaction coproporphyrinogen III + O2 + 2 H(+) = protoporphyrinogen IX + 2 CO2 + 2 H2O. It participates in porphyrin-containing compound metabolism; protoporphyrin-IX biosynthesis; protoporphyrinogen-IX from coproporphyrinogen-III (O2 route): step 1/1. In terms of biological role, involved in the heme biosynthesis. Catalyzes the aerobic oxidative decarboxylation of propionate groups of rings A and B of coproporphyrinogen-III to yield the vinyl groups in protoporphyrinogen-IX. In Rickettsia bellii (strain OSU 85-389), this protein is Oxygen-dependent coproporphyrinogen-III oxidase.